Consider the following 405-residue polypeptide: Argininosuccinate synthase (405 aa).

ATP contacts are provided by residues 12 to 20 (AYSGGLDTS) and A40. L-citrulline-binding residues include Y92 and S97. G122 contributes to the ATP binding site. L-aspartate-binding residues include T124, N128, and D129. N128 contributes to the L-citrulline binding site. Residues R132, S181, S190, E266, and Y278 each contribute to the L-citrulline site.

Belongs to the argininosuccinate synthase family. Type 1 subfamily. Homotetramer.

The protein localises to the cytoplasm. It catalyses the reaction L-citrulline + L-aspartate + ATP = 2-(N(omega)-L-arginino)succinate + AMP + diphosphate + H(+). It participates in amino-acid biosynthesis; L-arginine biosynthesis; L-arginine from L-ornithine and carbamoyl phosphate: step 2/3. This Edwardsiella ictaluri (strain 93-146) protein is Argininosuccinate synthase.